A 320-amino-acid chain; its full sequence is Ferrochelatase (320 aa).

Fe cation-binding residues include His-194 and Glu-275.

It belongs to the ferrochelatase family. As to quaternary structure, monomer.

Its subcellular location is the cytoplasm. It carries out the reaction heme b + 2 H(+) = protoporphyrin IX + Fe(2+). Its pathway is porphyrin-containing compound metabolism; protoheme biosynthesis; protoheme from protoporphyrin-IX: step 1/1. In terms of biological role, catalyzes the ferrous insertion into protoporphyrin IX. The polypeptide is Ferrochelatase (Shigella dysenteriae serotype 1 (strain Sd197)).